Here is a 336-residue protein sequence, read N- to C-terminus: Ribose-phosphate pyrophosphokinase (336 aa).

ATP-binding positions include 43–45 (DQE) and 102–103 (RQ). Residues H136 and D178 each coordinate Mg(2+). K201 is a catalytic residue. Residues R203, D227, and 231-235 (DTAGT) contribute to the D-ribose 5-phosphate site.

The protein belongs to the ribose-phosphate pyrophosphokinase family. Class I subfamily. Homohexamer. The cofactor is Mg(2+).

It is found in the cytoplasm. It carries out the reaction D-ribose 5-phosphate + ATP = 5-phospho-alpha-D-ribose 1-diphosphate + AMP + H(+). Its pathway is metabolic intermediate biosynthesis; 5-phospho-alpha-D-ribose 1-diphosphate biosynthesis; 5-phospho-alpha-D-ribose 1-diphosphate from D-ribose 5-phosphate (route I): step 1/1. Involved in the biosynthesis of the central metabolite phospho-alpha-D-ribosyl-1-pyrophosphate (PRPP) via the transfer of pyrophosphoryl group from ATP to 1-hydroxyl of ribose-5-phosphate (Rib-5-P). This is Ribose-phosphate pyrophosphokinase from Cereibacter sphaeroides (strain KD131 / KCTC 12085) (Rhodobacter sphaeroides).